The following is a 92-amino-acid chain: YcgL domain-containing protein SO_2575 (92 aa).

Positions 1-85 (MLCAVYKSSR…PQVNLLAEHR (85 aa)) constitute a YcgL domain.

The polypeptide is YcgL domain-containing protein SO_2575 (Shewanella oneidensis (strain ATCC 700550 / JCM 31522 / CIP 106686 / LMG 19005 / NCIMB 14063 / MR-1)).